A 241-amino-acid polypeptide reads, in one-letter code: Protein-L-isoaspartate O-methyltransferase (241 aa).

Serine 69 is an active-site residue.

It belongs to the methyltransferase superfamily. L-isoaspartyl/D-aspartyl protein methyltransferase family.

Its subcellular location is the cytoplasm. The enzyme catalyses [protein]-L-isoaspartate + S-adenosyl-L-methionine = [protein]-L-isoaspartate alpha-methyl ester + S-adenosyl-L-homocysteine. In terms of biological role, catalyzes the methyl esterification of L-isoaspartyl residues in peptides and proteins that result from spontaneous decomposition of normal L-aspartyl and L-asparaginyl residues. It plays a role in the repair and/or degradation of damaged proteins. In Hyperthermus butylicus (strain DSM 5456 / JCM 9403 / PLM1-5), this protein is Protein-L-isoaspartate O-methyltransferase.